The chain runs to 396 residues: Tryptophan synthase beta chain (396 aa).

K88 carries the N6-(pyridoxal phosphate)lysine modification.

Belongs to the TrpB family. Tetramer of two alpha and two beta chains. It depends on pyridoxal 5'-phosphate as a cofactor.

It catalyses the reaction (1S,2R)-1-C-(indol-3-yl)glycerol 3-phosphate + L-serine = D-glyceraldehyde 3-phosphate + L-tryptophan + H2O. The protein operates within amino-acid biosynthesis; L-tryptophan biosynthesis; L-tryptophan from chorismate: step 5/5. Functionally, the beta subunit is responsible for the synthesis of L-tryptophan from indole and L-serine. This is Tryptophan synthase beta chain from Shewanella putrefaciens (strain CN-32 / ATCC BAA-453).